We begin with the raw amino-acid sequence, 417 residues long: Gamma-glutamyl phosphate reductase (417 aa).

This sequence belongs to the gamma-glutamyl phosphate reductase family.

The protein resides in the cytoplasm. It carries out the reaction L-glutamate 5-semialdehyde + phosphate + NADP(+) = L-glutamyl 5-phosphate + NADPH + H(+). It functions in the pathway amino-acid biosynthesis; L-proline biosynthesis; L-glutamate 5-semialdehyde from L-glutamate: step 2/2. Its function is as follows. Catalyzes the NADPH-dependent reduction of L-glutamate 5-phosphate into L-glutamate 5-semialdehyde and phosphate. The product spontaneously undergoes cyclization to form 1-pyrroline-5-carboxylate. The polypeptide is Gamma-glutamyl phosphate reductase (Escherichia coli O45:K1 (strain S88 / ExPEC)).